A 99-amino-acid chain; its full sequence is Aspartyl/glutamyl-tRNA(Asn/Gln) amidotransferase subunit C (99 aa).

The protein belongs to the GatC family. Heterotrimer of A, B and C subunits.

The catalysed reaction is L-glutamyl-tRNA(Gln) + L-glutamine + ATP + H2O = L-glutaminyl-tRNA(Gln) + L-glutamate + ADP + phosphate + H(+). The enzyme catalyses L-aspartyl-tRNA(Asn) + L-glutamine + ATP + H2O = L-asparaginyl-tRNA(Asn) + L-glutamate + ADP + phosphate + 2 H(+). Functionally, allows the formation of correctly charged Asn-tRNA(Asn) or Gln-tRNA(Gln) through the transamidation of misacylated Asp-tRNA(Asn) or Glu-tRNA(Gln) in organisms which lack either or both of asparaginyl-tRNA or glutaminyl-tRNA synthetases. The reaction takes place in the presence of glutamine and ATP through an activated phospho-Asp-tRNA(Asn) or phospho-Glu-tRNA(Gln). This chain is Aspartyl/glutamyl-tRNA(Asn/Gln) amidotransferase subunit C, found in Burkholderia cenocepacia (strain ATCC BAA-245 / DSM 16553 / LMG 16656 / NCTC 13227 / J2315 / CF5610) (Burkholderia cepacia (strain J2315)).